We begin with the raw amino-acid sequence, 319 residues long: Probable cell division protein WhiA (319 aa).

The segment at residues 277–310 (SLEELGKLAEPAMTKDAIAGRIRRLLCLADKRAK) is a DNA-binding region (H-T-H motif).

It belongs to the WhiA family.

Its function is as follows. Involved in cell division and chromosome segregation. This chain is Probable cell division protein WhiA, found in Tropheryma whipplei (strain Twist) (Whipple's bacillus).